A 447-amino-acid polypeptide reads, in one-letter code: Rab GDP dissociation inhibitor alpha (447 aa).

Ser427 carries the post-translational modification Phosphoserine.

It belongs to the Rab GDI family. Interacts with RHOH. Interacts with the non-phosphorylated forms of RAB1A, RAB3A, RAB5A, RAB5B, RAB5C, RAB8A, RAB8B, RAB10, RAB12, RAB35, and RAB43. As to expression, high expression in brain, lower in other tissues.

Its subcellular location is the cytoplasm. The protein localises to the golgi apparatus. It is found in the trans-Golgi network. Regulates the GDP/GTP exchange reaction of most Rab proteins by inhibiting the dissociation of GDP from them, and the subsequent binding of GTP to them. Promotes the dissociation of GDP-bound Rab proteins from the membrane and inhibits their activation. Promotes the dissociation of RAB1A, RAB3A, RAB5A and RAB10 from membranes. In Rattus norvegicus (Rat), this protein is Rab GDP dissociation inhibitor alpha (Gdi1).